The following is a 271-amino-acid chain: MPELPEVETTLRGLSPHLVGQRIHGVILRRPDLRWPIPEQIERLLPGATITNVRRRAKYLLIDTDAGGSALLHLGMSGSLRVLPGDTLPRAHDHVDISLQNGRVLRFNDPRRFGCLLWQSDIQAHELLAALGPEPLSEAFTGDYLHALAYGRRAPVKTFLMDQAVVVGVGNIYAAESLHCAGISPLREAGKVSLDRYRRLAAAVKDILSYAIRRGGTTLRDFISPDGAPGYFEQELTVYGREGEPCKQCGRVLKHAMIGQRATVWCGSCQR.

The Schiff-base intermediate with DNA role is filled by Pro2. The active-site Proton donor is the Glu3. Catalysis depends on Lys58, which acts as the Proton donor; for beta-elimination activity. Positions 92, 111, and 152 each coordinate DNA. The FPG-type zinc finger occupies 237-271 (TVYGREGEPCKQCGRVLKHAMIGQRATVWCGSCQR). Catalysis depends on Arg261, which acts as the Proton donor; for delta-elimination activity.

Belongs to the FPG family. In terms of assembly, monomer. Requires Zn(2+) as cofactor.

It catalyses the reaction Hydrolysis of DNA containing ring-opened 7-methylguanine residues, releasing 2,6-diamino-4-hydroxy-5-(N-methyl)formamidopyrimidine.. The catalysed reaction is 2'-deoxyribonucleotide-(2'-deoxyribose 5'-phosphate)-2'-deoxyribonucleotide-DNA = a 3'-end 2'-deoxyribonucleotide-(2,3-dehydro-2,3-deoxyribose 5'-phosphate)-DNA + a 5'-end 5'-phospho-2'-deoxyribonucleoside-DNA + H(+). Involved in base excision repair of DNA damaged by oxidation or by mutagenic agents. Acts as a DNA glycosylase that recognizes and removes damaged bases. Has a preference for oxidized purines, such as 7,8-dihydro-8-oxoguanine (8-oxoG). Has AP (apurinic/apyrimidinic) lyase activity and introduces nicks in the DNA strand. Cleaves the DNA backbone by beta-delta elimination to generate a single-strand break at the site of the removed base with both 3'- and 5'-phosphates. This Xanthomonas oryzae pv. oryzae (strain MAFF 311018) protein is Formamidopyrimidine-DNA glycosylase.